A 384-amino-acid chain; its full sequence is Omega-6 fatty acid desaturase, endoplasmic reticulum (384 aa).

The disordered stretch occupies residues 1-23 (MGAGGRMQVSPSPKKSETDTLKR). A compositionally biased stretch (basic and acidic residues) spans 14–23 (KKSETDTLKR). The next 2 membrane-spanning stretches (helical) occupy residues 56–76 (LIWD…YFPL) and 84–104 (VAWP…WVIA). The Histidine box-1 signature appears at 105-109 (HECGH). Residues 117–137 (WLDDTVGLIFHSFLLVPYFSW) form a helical membrane-spanning segment. Positions 141–145 (HRRHH) match the Histidine box-2 motif. A run of 3 helical transmembrane segments spans residues 180-200 (VMLT…NVSG), 226-246 (IYVS…YAAA), and 253-273 (VCLY…ITYL). The Histidine box-3 signature appears at 316–320 (HVAHH).

The protein belongs to the fatty acid desaturase type 1 family.

The protein localises to the endoplasmic reticulum membrane. It participates in lipid metabolism; polyunsaturated fatty acid biosynthesis. In terms of biological role, ER (microsomal) omega-6 fatty acid desaturase introduces the second double bond in the biosynthesis of 18:3 fatty acids, important constituents of plant membranes. It is thought to use cytochrome b5 as an electron donor and to act on fatty acids esterified to phosphatidylcholine and, possibly, other phospholipids. The sequence is that of Omega-6 fatty acid desaturase, endoplasmic reticulum from Brassica juncea (Indian mustard).